The primary structure comprises 265 residues: Octanoyltransferase (265 aa).

The 220-residue stretch at 35-254 folds into the BPL/LPL catalytic domain; it reads DEVPDTVLLL…HLRDVLENAE (220 aa). Substrate-binding positions include 73–80, 184–186, and 197–199; these read RGGKITWH, AIG, and GFA. The active-site Acyl-thioester intermediate is Cys-215.

Belongs to the LipB family.

It localises to the cytoplasm. The enzyme catalyses octanoyl-[ACP] + L-lysyl-[protein] = N(6)-octanoyl-L-lysyl-[protein] + holo-[ACP] + H(+). Its pathway is protein modification; protein lipoylation via endogenous pathway; protein N(6)-(lipoyl)lysine from octanoyl-[acyl-carrier-protein]: step 1/2. Its function is as follows. Catalyzes the transfer of endogenously produced octanoic acid from octanoyl-acyl-carrier-protein onto the lipoyl domains of lipoate-dependent enzymes. Lipoyl-ACP can also act as a substrate although octanoyl-ACP is likely to be the physiological substrate. The protein is Octanoyltransferase of Streptomyces coelicolor (strain ATCC BAA-471 / A3(2) / M145).